The sequence spans 286 residues: Prohibitin-6, mitochondrial (286 aa).

Residues 1–12 (MNFKNVKVPKGP) lie on the Mitochondrial matrix side of the membrane. A helical; Signal-anchor for type II membrane protein transmembrane segment spans residues 13–35 (GGGVIAAVVIGGLSLYGATHTLY). At 36–286 (NVDGGHRAIV…AMDLDVKPKK (251 aa)) the chain is on the mitochondrial intermembrane side.

Belongs to the prohibitin family. Component of a prohibitin multimeric complex in mitochondrial membranes. In terms of tissue distribution, mostly expressed in proliferative tissues, including vasculature, shoot and root apical tissues.

It is found in the mitochondrion inner membrane. Its function is as follows. Prohibitin probably acts as a holdase/unfoldase for the stabilization of newly synthesized mitochondrial proteins. This chain is Prohibitin-6, mitochondrial (PHB6), found in Arabidopsis thaliana (Mouse-ear cress).